A 179-amino-acid chain; its full sequence is Large ribosomal subunit protein uL5 (179 aa).

The protein belongs to the universal ribosomal protein uL5 family. As to quaternary structure, part of the 50S ribosomal subunit; part of the 5S rRNA/L5/L18/L25 subcomplex. Contacts the 5S rRNA and the P site tRNA. Forms a bridge to the 30S subunit in the 70S ribosome.

Its function is as follows. This is one of the proteins that bind and probably mediate the attachment of the 5S RNA into the large ribosomal subunit, where it forms part of the central protuberance. In the 70S ribosome it contacts protein S13 of the 30S subunit (bridge B1b), connecting the 2 subunits; this bridge is implicated in subunit movement. Contacts the P site tRNA; the 5S rRNA and some of its associated proteins might help stabilize positioning of ribosome-bound tRNAs. The sequence is that of Large ribosomal subunit protein uL5 from Bordetella avium (strain 197N).